The following is a 174-amino-acid chain: Late lactation protein B (174 aa).

Residues 1 to 18 (MKVLFLTIALSLFSILQA) form the signal peptide. Residues Cys-77 and Cys-169 are joined by a disulfide bond.

It belongs to the calycin superfamily. Lipocalin family. In terms of tissue distribution, mammary gland specific. Secreted in milk.

The protein resides in the secreted. Functionally, probably serves a role in the transport of a small ligand released during the hydrolysis of milk fat. This Notamacropus eugenii (Tammar wallaby) protein is Late lactation protein B (LLPB).